The primary structure comprises 651 residues: Mitochondrial sodium/calcium exchanger protein (651 aa).

Residues 51–71 (VILIILGILYLIILFVIMSSI) traverse the membrane as a helical segment. The Cytoplasmic portion of the chain corresponds to 72-91 (ADDFFCPAISGIVSHLRMSE). A helical transmembrane segment spans residues 92-112 (SIAGVTFLAFGNGAPDVFSSI). The Extracellular portion of the chain corresponds to 113-126 (SSVLTTPKPKADLA). The helical transmembrane segment at 127–147 (LGDLFGTSIFVTTVVLAIIIF) threads the bilayer. Over 148-161 (TKSFKVAIIPTLRD) the chain is Cytoplasmic. The chain crosses the membrane as a helical span at residues 162 to 182 (LIFYMTTLAFIVFCFLKFDKI). Position 183 (Glu183) is a topological domain, extracellular. The chain crosses the membrane as a helical span at residues 184–204 (VWMPATFLGIYGVYVVTVIIL). At 205 to 398 (GIYRTHRKKR…PSRDEFSEMN (194 aa)) the chain is on the cytoplasmic side. A helical transmembrane segment spans residues 399-419 (IFIKIVTVIKVVPVFFFKLTV). Topologically, residues 420–428 (PSNEMSWCK) are extracellular. A helical transmembrane segment spans residues 429-449 (PLFILHCFASIQFALFSIQII). The Cytoplasmic segment spans residues 450-458 (TLKPFDGSP). A helical membrane pass occupies residues 459 to 479 (GLWLYGLGFSAILAMVAMYFL). Residues 480–486 (PLSKEQK) are Extracellular-facing. A helical transmembrane segment spans residues 487 to 507 (YYKEIYSYLGFLMSIAWIYAT). At 508 to 510 (SNE) the chain is on the cytoplasmic side. Residues 511-531 (IVSVVTMIGVVTGLSMELLGL) traverse the membrane as a helical segment. Topologically, residues 532-559 (TIMAWSNCIGDIVADIAVVKQGYPKMAM) are extracellular. A helical membrane pass occupies residues 560-580 (AAAIGGPLFNLLIGFGLPFTI). Topologically, residues 581–595 (AAAQGKEMELLINPV) are cytoplasmic. A helical membrane pass occupies residues 596-616 (YRLLMLFLGISLVTTFVALFI). At 617–626 (QRFTVRRPHA) the chain is on the extracellular side. The chain crosses the membrane as a helical span at residues 627–647 (VLLIFIFVVFLIFICLAEFHV). Residues 648–651 (LEWN) lie on the Cytoplasmic side of the membrane.

The protein belongs to the Ca(2+):cation antiporter (CaCA) (TC 2.A.19) family. SLC24A subfamily. As to expression, expressed in the seam cells of the organism. Expression is visible in the seam cells across all larval stages, and expression persists into the adult stage of the organism.

It localises to the mitochondrion inner membrane. Its activity is regulated as follows. Inhibited by the sodium/calcium exchanger inhibitor CGP-37157. Mitochondrial sodium/calcium antiporter that mediates sodium-dependent calcium efflux from mitochondrion, thereby acting as a key regulator of mitochondrion calcium homeostasis. Required for patterning of neural circuits: functions in the same pathway as RAC-dependent effectors of the unc-6/netrin signaling pathway to set left/ right patterning of the VD/DD GABAergic circuit. The sequence is that of Mitochondrial sodium/calcium exchanger protein from Caenorhabditis elegans.